We begin with the raw amino-acid sequence, 724 residues long: Small conductance calcium-activated potassium channel protein 3 (724 aa).

Residues 1 to 11 (MDTSGHFHDSG) are compositionally biased toward basic and acidic residues. Disordered stretches follow at residues 1–161 (MDTS…RDSN) and 232–251 (ATHNHQHAGTTASSTTFPKA). Residues 34-58 (QPPPPPPPPAPPAAPQQPPGPPLQP) show a composition bias toward pro residues. The segment covering 59-88 (QPLQLQQQQQQQQQQPPHPLSQLAQLQSQP) has biased composition (low complexity). Over residues 105 to 125 (PSSNSTAILHPSSRQGSQLNL) the composition is skewed to polar residues. Residues 131-140 (GHSPSSTATS) are compositionally biased toward low complexity. Ser160 carries the phosphoserine modification. Polar residues predominate over residues 232-249 (ATHNHQHAGTTASSTTFP). A helical transmembrane segment spans residues 281-301 (LIFGMFGIVVMVIETELSWGL). The chain crosses the membrane as a helical span at residues 308 to 328 (FSLALKCLISLSTIILLGLII). Residues 359–379 (ISLEMLVCAIHPIPGEYKFFW) traverse the membrane as a helical segment. Residues 398 to 418 (IILSIPMFLRLYLIARVMLLH) form a helical membrane-spanning segment. A helical transmembrane segment spans residues 447-467 (LMTICPGTVLLVFSISLWIIA). The pore-forming intramembrane region spans 487 to 507 (FLGAMWLISITFLSIGYGDMV). A helical transmembrane segment spans residues 516 to 536 (VCLLTGIMGAGCTALVVAVVA). The segment at 554–630 (DTQLTKRIKN…LVDLSKMQNV (77 aa)) is calmodulin-binding. Positions 635 to 662 (ITELNDRSEDLEKQIGSLESKLEHLTAS) form a coiled coil. The disordered stretch occupies residues 702–724 (LSDSPIGVSSTSFPTPYTSSSSC). The segment covering 710 to 724 (SSTSFPTPYTSSSSC) has biased composition (low complexity).

The protein belongs to the potassium channel KCNN family. KCa2.3/KCNN3 subfamily. In terms of assembly, homodimer. Heteromultimer with KCNN2 or KCNN1; this modulates plasma membrane expression and consequently the small conductance calcium-activated potassium channel activity. The complex is composed of 4 channel subunits each of which binds to a calmodulin subunit which regulates the channel activity through calcium-binding. Interacts with CALM1.

It localises to the cell membrane. Its subcellular location is the cytoplasm. It is found in the myofibril. The protein resides in the sarcomere. The protein localises to the z line. It catalyses the reaction K(+)(in) = K(+)(out). Inhibited by bee venom neurotoxin apamin. Functionally, small conductance calcium-activated potassium channel that mediates the voltage-independent transmembrane transfer of potassium across the cell membrane through a constitutive interaction with calmodulin which binds the intracellular calcium allowing its opening. The current is characterized by a voltage-independent activation, an intracellular calcium concentration increase-dependent activation and a single-channel conductance of 10 picosiemens. Also presents an inwardly rectifying current, thus reducing its already small outward conductance of potassium ions, which is particularly the case when the membrane potential displays positive values, above + 20 mV. Activation is followed by membrane hyperpolarization. Thought to regulate neuronal excitability by contributing to the slow component of synaptic afterhyperpolarization. This chain is Small conductance calcium-activated potassium channel protein 3, found in Sus scrofa (Pig).